A 1076-amino-acid chain; its full sequence is Enhancer of mRNA-decapping protein 4-like protein pdc1 (1076 aa).

Composition is skewed to low complexity over residues 1–19 (MNEQ…LPNL) and 53–69 (SSLL…SNQS). 3 disordered regions span residues 1 to 82 (MNEQ…ASHS), 95 to 127 (GAKP…FNPV), and 139 to 204 (STGP…AEEQ). Residues 70-82 (PSNSGPKYYASHS) show a composition bias toward polar residues. Residues 153–173 (NDSQDTAFQSSRNMPSDTSVA) are compositionally biased toward polar residues. Over residues 174–184 (SPDYSHSQSSS) the composition is skewed to low complexity. Residues 185–195 (PIANYQESGNS) show a composition bias toward polar residues. 2 WD repeats span residues 292-334 (NSPN…STSE) and 402-441 (DTGI…PSTP). Disordered stretches follow at residues 666 to 714 (RHST…SPSS) and 892 to 934 (TAPD…PAQG). Over residues 669-688 (TASPSTVNSGFSTPRSQATG) the composition is skewed to polar residues. Serine 671 and serine 673 each carry phosphoserine. Threonine 674 is modified (phosphothreonine). The segment covering 695–706 (DKGERFETKDKS) has biased composition (basic and acidic residues). The tract at residues 789 to 1076 (MQVALKEEIA…ISEISVASSN (288 aa)) is interaction with dcp2. Serine 1075 carries the post-translational modification Phosphoserine.

It belongs to the WD repeat EDC4 family. Interacts with dcp2; via C-terminus.

The protein resides in the cytoplasm. Its subcellular location is the P-body. In terms of biological role, involved in P-body formation. Acts as a functional homolog of human EDC4, which plays a role in mRNA decapping in the process of mRNA degradation. Enhances the decapping activity of dcp2. Together with edc3, acts as a scaffolding protein sufficient for the phase transition of the components of the 5' to 3' mRNA degradation machinery to form P-bodies. Intermolecular interactions between the edc3 Sm domain and at least 10 helical leucine-rich motifs in dcp2 and pdc1 build the core of the interaction network of this spontaneous clustering process. The chain is Enhancer of mRNA-decapping protein 4-like protein pdc1 from Schizosaccharomyces pombe (strain 972 / ATCC 24843) (Fission yeast).